Reading from the N-terminus, the 305-residue chain is UDP-3-O-acyl-N-acetylglucosamine deacetylase (305 aa).

Residues histidine 79, histidine 238, and aspartate 242 each coordinate Zn(2+). Histidine 265 functions as the Proton donor in the catalytic mechanism.

The protein belongs to the LpxC family. It depends on Zn(2+) as a cofactor.

The catalysed reaction is a UDP-3-O-[(3R)-3-hydroxyacyl]-N-acetyl-alpha-D-glucosamine + H2O = a UDP-3-O-[(3R)-3-hydroxyacyl]-alpha-D-glucosamine + acetate. The protein operates within glycolipid biosynthesis; lipid IV(A) biosynthesis; lipid IV(A) from (3R)-3-hydroxytetradecanoyl-[acyl-carrier-protein] and UDP-N-acetyl-alpha-D-glucosamine: step 2/6. In terms of biological role, catalyzes the hydrolysis of UDP-3-O-myristoyl-N-acetylglucosamine to form UDP-3-O-myristoylglucosamine and acetate, the committed step in lipid A biosynthesis. The protein is UDP-3-O-acyl-N-acetylglucosamine deacetylase of Edwardsiella ictaluri (strain 93-146).